A 114-amino-acid polypeptide reads, in one-letter code: Large ribosomal subunit protein uL24 (114 aa).

This sequence belongs to the universal ribosomal protein uL24 family. In terms of assembly, part of the 50S ribosomal subunit.

Functionally, one of two assembly initiator proteins, it binds directly to the 5'-end of the 23S rRNA, where it nucleates assembly of the 50S subunit. One of the proteins that surrounds the polypeptide exit tunnel on the outside of the subunit. This Thermomicrobium roseum (strain ATCC 27502 / DSM 5159 / P-2) protein is Large ribosomal subunit protein uL24.